A 332-amino-acid polypeptide reads, in one-letter code: Cysteine and histidine-rich domain-containing protein 1 (332 aa).

A2 carries the N-acetylalanine modification. Residues 2-77 (ALLCYNRGCG…KPPEPVKPEV (76 aa)) are interaction with PPP5C. Zn(2+) contacts are provided by C5, C10, C24, H27, C42, and C43. CHORD domains follow at residues 5-64 (CYNR…KGRH) and 157-216 (CKNG…TGKH). A Phosphothreonine modification is found at T47. S51 carries the phosphoserine modification. C59, H64, C157, C162, C176, H179, C194, C195, C211, and H216 together coordinate Zn(2+). The segment at 61-82 (KGRHNSEKPPEPVKPEVKTTEK) is disordered. Over residues 64-82 (HNSEKPPEPVKPEVKTTEK) the composition is skewed to basic and acidic residues. Residues 65-316 (NSEKPPEPVK…AEPMQWASLE (252 aa)) are interaction with HSP90AA1 and HSP90AB1. Positions 227-316 (VVPCRHDWHQ…AEPMQWASLE (90 aa)) constitute a CS domain.

In terms of assembly, interacts with HSP90AA1, HSP90AB1, PPP5C, ROCK1 and ROCK2.

In terms of biological role, regulates centrosome duplication, probably by inhibiting the kinase activity of ROCK2. Proposed to act as co-chaperone for HSP90. May play a role in the regulation of NOD1 via a HSP90 chaperone complex. In vitro, has intrinsic chaperone activity. This function may be achieved by inhibiting association of ROCK2 with NPM1. Plays a role in ensuring the localization of the tyrosine kinase receptor EGFR to the plasma membrane, and thus ensures the subsequent regulation of EGFR activity and EGF-induced actin cytoskeleton remodeling. Involved in stress response. Prevents tumorigenesis. The chain is Cysteine and histidine-rich domain-containing protein 1 (CHORDC1) from Sus scrofa (Pig).